The chain runs to 311 residues: Pyrimidine-specific ribonucleoside hydrolase RihA (311 aa).

Residue His240 is part of the active site.

It belongs to the IUNH family. RihA subfamily.

Its function is as follows. Hydrolyzes cytidine or uridine to ribose and cytosine or uracil, respectively. The chain is Pyrimidine-specific ribonucleoside hydrolase RihA from Salmonella choleraesuis (strain SC-B67).